The primary structure comprises 154 residues: Deoxyuridine 5'-triphosphate nucleotidohydrolase (154 aa).

Substrate-binding positions include 72-74 (RSG), Asn-85, 89-91 (LID), and Met-99.

The protein belongs to the dUTPase family. The cofactor is Mg(2+).

It carries out the reaction dUTP + H2O = dUMP + diphosphate + H(+). The protein operates within pyrimidine metabolism; dUMP biosynthesis; dUMP from dCTP (dUTP route): step 2/2. In terms of biological role, this enzyme is involved in nucleotide metabolism: it produces dUMP, the immediate precursor of thymidine nucleotides and it decreases the intracellular concentration of dUTP so that uracil cannot be incorporated into DNA. This is Deoxyuridine 5'-triphosphate nucleotidohydrolase from Psychrobacter arcticus (strain DSM 17307 / VKM B-2377 / 273-4).